The chain runs to 119 residues: Large ribosomal subunit protein bL20 (119 aa).

The protein belongs to the bacterial ribosomal protein bL20 family.

Functionally, binds directly to 23S ribosomal RNA and is necessary for the in vitro assembly process of the 50S ribosomal subunit. It is not involved in the protein synthesizing functions of that subunit. In Dehalococcoides mccartyi (strain ATCC BAA-2266 / KCTC 15142 / 195) (Dehalococcoides ethenogenes (strain 195)), this protein is Large ribosomal subunit protein bL20.